The primary structure comprises 1132 residues: Tyrosine-protein kinase JAK2 (1132 aa).

The interaction with cytokine/interferon/growth hormone receptors stretch occupies residues 1-239; it reads MGMACLTMTE…RYRFRRFIQQ (239 aa). Residues 37–380 enclose the FERM domain; it reads PVLLVYLYHS…GYYRLTADAH (344 aa). Y119 bears the Phosphotyrosine; by autocatalysis mark. A phosphotyrosine mark is found at Y372 and Y373. The region spanning 401-482 is the SH2; atypical domain; that stretch reads HGPISMDFAI…SLKDLLNCYQ (82 aa). Residue S523 is modified to Phosphoserine. A Protein kinase 1 domain is found at 545–809; sequence LIFNESLGQG…AIIRDLNSLF (265 aa). A phosphotyrosine mark is found at Y570 and Y813. One can recognise a Protein kinase 2 domain in the interval 849 to 1126; that stretch reads LKFLQQLGKG…RDLALRVDQI (278 aa). 855-863 contributes to the ATP binding site; sequence LGKGNFGSV. Position 868 is a phosphotyrosine; by autocatalysis (Y868). K882 is a binding site for ATP. A phosphotyrosine; by autocatalysis mark is found at Y966 and Y972. Catalysis depends on D976, which acts as the Proton acceptor. Y1007 and Y1008 each carry phosphotyrosine; by autocatalysis.

The protein belongs to the protein kinase superfamily. Tyr protein kinase family. JAK subfamily. Interacts with IL23R, SKB1 and STAM2. Interacts with EPOR. Interacts with LYN. Interacts with SIRPA. Interacts with SH2B1. Interacts with TEC. Interacts with IFNGR2 (via intracellular domain). Interacts with LEPR (Isoform B). Interacts with HSP90AB1; promotes functional activation in a heat shock-dependent manner. Interacts with STRA6. Interacts with RHEX; this interaction occurs in a erythropoietin (EPO)-dependent manner. Interacts with ASB2; the interaction targets JAK2 for Notch-induced proteasomal degradation. Requires Mg(2+) as cofactor. In terms of processing, autophosphorylated, leading to regulate its activity. Leptin promotes phosphorylation on tyrosine residues, including phosphorylation on Tyr-813. Autophosphorylation on Tyr-119 in response to EPO down-regulates its kinase activity. Autophosphorylation on Tyr-868, Tyr-966 and Tyr-972 in response to growth hormone (GH) are required for maximal kinase activity. Also phosphorylated by TEC. Phosphorylated on tyrosine residues in response to interferon gamma signaling. Phosphorylated on tyrosine residues in response to a signaling cascade that is activated by increased cellular retinol. Post-translationally, undergoes Notch-induced ubiquitination and subsequent proteasomal degradation which is mediated by ASB1 or ASB2, the substrate-recognition components of probable ECS E3 ubiquitin-protein ligase complexes.

Its subcellular location is the endomembrane system. It localises to the cytoplasm. The protein localises to the nucleus. It carries out the reaction L-tyrosyl-[protein] + ATP = O-phospho-L-tyrosyl-[protein] + ADP + H(+). Its activity is regulated as follows. Regulated by autophosphorylation, can both activate or decrease activity. Heme regulates its activity by enhancing the phosphorylation on Tyr-1007 and Tyr-1008. Non-receptor tyrosine kinase involved in various processes such as cell growth, development, differentiation or histone modifications. Mediates essential signaling events in both innate and adaptive immunity. In the cytoplasm, plays a pivotal role in signal transduction via its association with type I receptors such as growth hormone (GHR), prolactin (PRLR), leptin (LEPR), erythropoietin (EPOR), thrombopoietin (THPO); or type II receptors including IFN-alpha, IFN-beta, IFN-gamma and multiple interleukins. Following ligand-binding to cell surface receptors, phosphorylates specific tyrosine residues on the cytoplasmic tails of the receptor, creating docking sites for STATs proteins. Subsequently, phosphorylates the STATs proteins once they are recruited to the receptor. Phosphorylated STATs then form homodimer or heterodimers and translocate to the nucleus to activate gene transcription. For example, cell stimulation with erythropoietin (EPO) during erythropoiesis leads to JAK2 autophosphorylation, activation, and its association with erythropoietin receptor (EPOR) that becomes phosphorylated in its cytoplasmic domain. Then, STAT5 (STAT5A or STAT5B) is recruited, phosphorylated and activated by JAK2. Once activated, dimerized STAT5 translocates into the nucleus and promotes the transcription of several essential genes involved in the modulation of erythropoiesis. Part of a signaling cascade that is activated by increased cellular retinol and that leads to the activation of STAT5 (STAT5A or STAT5B). In addition, JAK2 mediates angiotensin-2-induced ARHGEF1 phosphorylation. Plays a role in cell cycle by phosphorylating CDKN1B. Cooperates with TEC through reciprocal phosphorylation to mediate cytokine-driven activation of FOS transcription. In the nucleus, plays a key role in chromatin by specifically mediating phosphorylation of 'Tyr-41' of histone H3 (H3Y41ph), a specific tag that promotes exclusion of CBX5 (HP1 alpha) from chromatin. Up-regulates the potassium voltage-gated channel activity of KCNA3. In Pongo abelii (Sumatran orangutan), this protein is Tyrosine-protein kinase JAK2.